Consider the following 142-residue polypeptide: Glia maturation factor beta (142 aa).

S2 bears the N-acetylserine mark. One can recognise an ADF-H domain in the interval 4-139 (SLVVCDVAED…TEEWLREKLG (136 aa)).

It belongs to the actin-binding proteins ADF family. GMF subfamily. Post-translationally, phosphorylated; stimulated by phorbol ester.

Its function is as follows. This protein causes differentiation of brain cells, stimulation of neural regeneration, and inhibition of proliferation of tumor cells. This chain is Glia maturation factor beta (Gmfb), found in Rattus norvegicus (Rat).